Reading from the N-terminus, the 342-residue chain is Spermidine synthase (342 aa).

Residues 9–42 form a disordered region; it reads MKGTELPVKRPREEEAETEMEAANNSNNGCEKEE. Residues 52–289 enclose the PABS domain; that stretch reads PGWFSEISPL…GMIGFMLCST (238 aa). S-adenosyl 3-(methylsulfanyl)propylamine is bound at residue Gln-83. Putrescine is bound at residue Tyr-113. S-adenosyl 3-(methylsulfanyl)propylamine is bound by residues Gln-114, Asp-138, Glu-158, 189–190, and Asp-208; that span reads DG. Asp-208 serves as the catalytic Proton acceptor. Putrescine-binding positions include 208–211 and Tyr-277; that span reads DSSD.

This sequence belongs to the spermidine/spermine synthase family.

It carries out the reaction S-adenosyl 3-(methylsulfanyl)propylamine + putrescine = S-methyl-5'-thioadenosine + spermidine + H(+). It functions in the pathway amine and polyamine biosynthesis; spermidine biosynthesis; spermidine from putrescine: step 1/1. In Solanum lycopersicum (Tomato), this protein is Spermidine synthase (SPDSYN).